The chain runs to 480 residues: UDP-N-acetylmuramate--L-alanine ligase (480 aa).

129–135 lines the ATP pocket; that stretch reads GTHGKTT.

Belongs to the MurCDEF family.

Its subcellular location is the cytoplasm. The enzyme catalyses UDP-N-acetyl-alpha-D-muramate + L-alanine + ATP = UDP-N-acetyl-alpha-D-muramoyl-L-alanine + ADP + phosphate + H(+). The protein operates within cell wall biogenesis; peptidoglycan biosynthesis. In terms of biological role, cell wall formation. In Mannheimia succiniciproducens (strain KCTC 0769BP / MBEL55E), this protein is UDP-N-acetylmuramate--L-alanine ligase.